The chain runs to 273 residues: Bis(5'-nucleosyl)-tetraphosphatase, symmetrical (273 aa).

This sequence belongs to the Ap4A hydrolase family.

The catalysed reaction is P(1),P(4)-bis(5'-adenosyl) tetraphosphate + H2O = 2 ADP + 2 H(+). Functionally, hydrolyzes diadenosine 5',5'''-P1,P4-tetraphosphate to yield ADP. The protein is Bis(5'-nucleosyl)-tetraphosphatase, symmetrical of Proteus mirabilis (strain HI4320).